We begin with the raw amino-acid sequence, 123 residues long: Small ribosomal subunit protein uS12 (123 aa).

Residues 1–24 (MPTINQLIRKERKKQVKKSKSPAL) form a disordered region. Positions 10–20 (KERKKQVKKSK) are enriched in basic residues. A 3-methylthioaspartic acid modification is found at Asp-89.

The protein belongs to the universal ribosomal protein uS12 family. Part of the 30S ribosomal subunit. Contacts proteins S8 and S17. May interact with IF1 in the 30S initiation complex.

Functionally, with S4 and S5 plays an important role in translational accuracy. Interacts with and stabilizes bases of the 16S rRNA that are involved in tRNA selection in the A site and with the mRNA backbone. Located at the interface of the 30S and 50S subunits, it traverses the body of the 30S subunit contacting proteins on the other side and probably holding the rRNA structure together. The combined cluster of proteins S8, S12 and S17 appears to hold together the shoulder and platform of the 30S subunit. The chain is Small ribosomal subunit protein uS12 from Sulfurovum sp. (strain NBC37-1).